Here is a 248-residue protein sequence, read N- to C-terminus: DNA polymerase sliding clamp 2 (248 aa).

The protein belongs to the PCNA family. Homotrimer. The subunits circularize to form a toroid; DNA passes through its center. Replication factor C (RFC) is required to load the toroid on the DNA.

In terms of biological role, sliding clamp subunit that acts as a moving platform for DNA processing. Responsible for tethering the catalytic subunit of DNA polymerase and other proteins to DNA during high-speed replication. This Sulfurisphaera ohwakuensis protein is DNA polymerase sliding clamp 2.